A 210-amino-acid polypeptide reads, in one-letter code: Large ribosomal subunit protein bL25 (210 aa).

The segment at 179-210 (LPPQQEEEIHSGEQQEPGQPEAEEGRETTPEG) is disordered. Residues 201-210 (EEGRETTPEG) show a composition bias toward basic and acidic residues.

Belongs to the bacterial ribosomal protein bL25 family. CTC subfamily. Part of the 50S ribosomal subunit; part of the 5S rRNA/L5/L18/L25 subcomplex. Contacts the 5S rRNA. Binds to the 5S rRNA independently of L5 and L18.

Its function is as follows. This is one of the proteins that binds to the 5S RNA in the ribosome where it forms part of the central protuberance. The polypeptide is Large ribosomal subunit protein bL25 (Geobacillus thermodenitrificans (strain NG80-2)).